The primary structure comprises 448 residues: Trk system potassium uptake protein TrkA homolog 2 (448 aa).

The region spanning 1-124 is the RCK N-terminal 1 domain; the sequence is MKAVVIGAGE…RAQVGVDIMI (124 aa). NAD(+)-binding positions include 7–11, Glu29, 70–71, and Arg101; these read GAGEV and TG. The region spanning 144-225 is the RCK C-terminal 1 domain; it reads IDAEMFAGGK…MADLENVFGN (82 aa). Positions 230-348 constitute an RCK N-terminal 2 domain; sequence RNRILLIGCG…FEMVGIDIAV (119 aa). 232-262 is a binding site for NAD(+); that stretch reads RILLIGCGIVGFYLAKIIDKDENADLKVIEY. The region spanning 368 to 448 is the RCK C-terminal 2 domain; the sequence is EALATIEGEK…AVRSVEKLFK (81 aa).

Its function is as follows. Part of a potassium transport system. The polypeptide is Trk system potassium uptake protein TrkA homolog 2 (trkA2) (Methanosarcina mazei (strain ATCC BAA-159 / DSM 3647 / Goe1 / Go1 / JCM 11833 / OCM 88) (Methanosarcina frisia)).